Here is a 218-residue protein sequence, read N- to C-terminus: Small ribosomal subunit protein uS3c (218 aa).

In terms of domain architecture, KH type-2 spans 43 to 118 (IKNYVQKNMK…KLNISITRIE (76 aa)).

It belongs to the universal ribosomal protein uS3 family. In terms of assembly, part of the 30S ribosomal subunit.

Its subcellular location is the plastid. The protein localises to the chloroplast. The chain is Small ribosomal subunit protein uS3c (rps3) from Populus trichocarpa (Western balsam poplar).